Reading from the N-terminus, the 531-residue chain is T-complex protein 1 subunit zeta (531 aa).

Position 2 is an N-acetylalanine (Ala-2). At Lys-5 the chain carries N6-acetyllysine. Gly-39 is a binding site for ADP. Gly-39 contacts ATP. Asp-90 serves as a coordination point for Mg(2+). ADP is bound by residues Gly-91, Thr-92, Thr-93, Ser-94, Thr-158, and Lys-159. ATP-binding residues include Gly-91, Thr-92, and Thr-93. Lys-199 bears the N6-acetyllysine mark. Ser-205 bears the Phosphoserine mark. Lys-251 is covalently cross-linked (Glycyl lysine isopeptide (Lys-Gly) (interchain with G-Cter in SUMO2)). N6-acetyllysine occurs at positions 287, 365, 377, and 388. ADP is bound at residue Ala-411. ATP contacts are provided by Ala-411, Gly-412, Asp-496, and Lys-501. Asp-496 is a binding site for ADP.

The protein belongs to the TCP-1 chaperonin family. In terms of assembly, component of the chaperonin-containing T-complex (TRiC), a hexadecamer composed of two identical back-to-back stacked rings enclosing a protein folding chamber. Each ring is made up of eight different subunits: TCP1/CCT1, CCT2, CCT3, CCT4, CCT5, CCT6A/CCT6, CCT7, CCT8. Interacts with PACRG.

Its subcellular location is the cytoplasm. It catalyses the reaction ATP + H2O = ADP + phosphate + H(+). Functionally, component of the chaperonin-containing T-complex (TRiC), a molecular chaperone complex that assists the folding of actin, tubulin and other proteins upon ATP hydrolysis. The TRiC complex mediates the folding of WRAP53/TCAB1, thereby regulating telomere maintenance. In Homo sapiens (Human), this protein is T-complex protein 1 subunit zeta (CCT6A).